The chain runs to 264 residues: Phosphatidylglycerol--prolipoprotein diacylglyceryl transferase (264 aa).

4 helical membrane passes run 17 to 37, 57 to 77, 89 to 109, and 118 to 138; these read LAIHWYGLMYLLAFAFVYLLG, LIFYSVLGVVLGGRLGYVLFY, IAFLWEGGMSFHGGLIGVILV, and GVSFFTISDFIAPLIPLGLGA. Arg-140 serves as a coordination point for a 1,2-diacyl-sn-glycero-3-phospho-(1'-sn-glycerol). Helical transmembrane passes span 173-193, 201-221, and 237-257; these read PSQLYELGLEGLVLFALLWWF, GQVSAMFLMGYGAFRFLVEFT, and MGQWLSLPMFLGGLVLFVLTA.

It belongs to the Lgt family.

The protein resides in the cell inner membrane. It catalyses the reaction L-cysteinyl-[prolipoprotein] + a 1,2-diacyl-sn-glycero-3-phospho-(1'-sn-glycerol) = an S-1,2-diacyl-sn-glyceryl-L-cysteinyl-[prolipoprotein] + sn-glycerol 1-phosphate + H(+). It participates in protein modification; lipoprotein biosynthesis (diacylglyceryl transfer). In terms of biological role, catalyzes the transfer of the diacylglyceryl group from phosphatidylglycerol to the sulfhydryl group of the N-terminal cysteine of a prolipoprotein, the first step in the formation of mature lipoproteins. The chain is Phosphatidylglycerol--prolipoprotein diacylglyceryl transferase from Bordetella avium (strain 197N).